A 339-amino-acid chain; its full sequence is Lipopolysaccharide 1,2-glucosyltransferase (339 aa).

Residues 35–40 (GIDENY) and 132–133 (DA) each bind UDP. Residues Asp132 and Asp134 each coordinate Mg(2+). 2 short sequence motifs (DXD) span residues 132 to 134 (DAD) and 219 to 221 (DQD). Residue His268 participates in Mg(2+) binding. 268-274 (HYTGITK) contacts UDP.

This sequence belongs to the glycosyltransferase 8 family. Mg(2+) is required as a cofactor.

It localises to the cell inner membrane. It carries out the reaction UDP-glucose + [lipopolysaccharide] = UDP + D-glucosyl-[lipopolysaccharide].. Its pathway is bacterial outer membrane biogenesis; LPS core biosynthesis. In terms of biological role, glucosyltransferase involved in the biosynthesis of the core oligosaccharide region of lipopolysaccharide (LPS). Catalyzes the addition of a glucose (glucose II) to the outer-core galactose I. Has a marked preference for its specific donor substrate, but it appears to have a relaxed specificity for alternate LPS acceptor residues, providing the overall size of the acceptor is conserved. In Escherichia coli, this protein is Lipopolysaccharide 1,2-glucosyltransferase.